The sequence spans 733 residues: Protein ROG3 (733 aa).

Positions 460–463 (PPNY) match the PY-motif motif. Residues 518-566 (RDNLGLPPSASSAAASRSLSPLLNVPAPEDGTERILPQSALGPNSGSVP) are disordered. Residues 523–540 (LPPSASSAAASRSLSPLL) show a composition bias toward low complexity. A PY-motif motif is present at residues 625 to 628 (PPSY). Disordered stretches follow at residues 636–658 (QPRK…SIPT) and 693–733 (ELTS…GNKR). Positions 646-658 (RNSSTTLSSSIPT) are enriched in low complexity.

This sequence belongs to the arrestin family. In terms of assembly, interacts with RSP5 via its 2 PY-motifs.

Functionally, involved in resistance to GST substrate o-dinitrobenzene (o-DNB). In Saccharomyces cerevisiae (strain ATCC 204508 / S288c) (Baker's yeast), this protein is Protein ROG3 (ROG3).